The sequence spans 420 residues: MNIIDELSWRGLINQSTDLEALREEASTPITLYCGFDPTGPSLHAGHLVPLLMLRRFQQAGHNPIVLAGGATGMIGDPRDVGERTMNSADTVSDWAERISGQLSRFVDFDGEHAARLVNNAEWTNEMSVVTFLRDVGKHFSLNTMLARDTVKRRLESDGISYTEFSYMLLQANDYVELNKRFGCTLQVGGGDQWGNIVSGVDLNRRVNGTSVHAVTVPLVTDSDGKKFGKSTGGGSLWLDPEMTSPYAWYQYFINASDADVIRYLRWFTFLTQEELAELEVEVAERPFKREAQRRLAREMTNLVHGTEATEAVELAAQALFGRAELRDLDEKTLAASVSETAVAEIKAGEPRTIIDLLVASGLADSKGAAKRAVKEGGAYVNNERIESDDWEPFAEDLLHGSWLVLRRGKKNFAGVQILG.

Tyrosine 33 contacts L-tyrosine. The 'HIGH' region motif lies at 38–47; it reads PTGPSLHAGH. L-tyrosine contacts are provided by tyrosine 167 and glutamine 171. Residues 227–231 carry the 'KMSKS' region motif; it reads KFGKS. Lysine 230 provides a ligand contact to ATP. Residues 352–418 enclose the S4 RNA-binding domain; that stretch reads RTIIDLLVAS…GKKNFAGVQI (67 aa).

It belongs to the class-I aminoacyl-tRNA synthetase family. TyrS type 1 subfamily. Homodimer.

The protein resides in the cytoplasm. The catalysed reaction is tRNA(Tyr) + L-tyrosine + ATP = L-tyrosyl-tRNA(Tyr) + AMP + diphosphate + H(+). Catalyzes the attachment of tyrosine to tRNA(Tyr) in a two-step reaction: tyrosine is first activated by ATP to form Tyr-AMP and then transferred to the acceptor end of tRNA(Tyr). In Corynebacterium glutamicum (strain ATCC 13032 / DSM 20300 / JCM 1318 / BCRC 11384 / CCUG 27702 / LMG 3730 / NBRC 12168 / NCIMB 10025 / NRRL B-2784 / 534), this protein is Tyrosine--tRNA ligase.